Reading from the N-terminus, the 941-residue chain is Cilia- and flagella-associated protein 69 (941 aa).

It localises to the cell projection. The protein localises to the cilium. Its subcellular location is the flagellum. Cilium- and flagellum-associated protein. In the olfactory epithelium, regulates the speed of activation and termination of the odor response and thus contributes to the robustness of olfactory transduction pathways. Required for sperm flagellum assembly and stability. The polypeptide is Cilia- and flagella-associated protein 69 (Callithrix jacchus (White-tufted-ear marmoset)).